A 109-amino-acid polypeptide reads, in one-letter code: Large ribosomal subunit protein uL23 (109 aa).

It belongs to the universal ribosomal protein uL23 family. Part of the 50S ribosomal subunit. Contacts protein L29, and trigger factor when it is bound to the ribosome.

Its function is as follows. One of the early assembly proteins it binds 23S rRNA. One of the proteins that surrounds the polypeptide exit tunnel on the outside of the ribosome. Forms the main docking site for trigger factor binding to the ribosome. The chain is Large ribosomal subunit protein uL23 from Prosthecochloris aestuarii (strain DSM 271 / SK 413).